A 589-amino-acid chain; its full sequence is MSSDANLNVLWARALLEELVRGGVRHAVVCPGSRSSPLALACAGTEGLRTWSVIDERSAGFFALGLAKQSRAPAVVVATSGTAGAHFYPAVIEAALSHVPLVVLTADRPLELQGWGAPQTVPQARFFGEHARFYADLGQPEAHDAALIHMRATVARAVVSAWRAPRGAVQLNVPFREPLAPIAEPFPEASLSALAKSGRAGAPLTRIVPPEPVPDASTLDEVRRRIAATTRGVIVCGPRDEMDGFAAAISALSQATGYPVLAESTSQARYGGGPLTLSYYDAMLRHAPFAKAHRPELVLRFGGGLTPKVPQQWLDGSGADTVLFSDGGGLFDPAHRASTVVEGSAVAACEALTRGLARGVGAWARGFLAAEQRVRTALEAAFAEQPDVLSEPRIAREVVAALPAGAPLFVSSSMPIRDLDAFAPAGTVPLRVLANRGANGIDGIVSSALGMAAAAGRSAVLLTGDLALLHDVGAFVTASRTRVPLTVVAVNNDGGGIFSFLPIAQVAPRDTFETLFGTPHGVDLSHAAALGGARLHRPETPVALRSAVREGLEGGLHLVEVRVDRNANVDEHRRLFARMAASLGEGPWA.

The protein belongs to the TPP enzyme family. MenD subfamily. Homodimer. It depends on Mg(2+) as a cofactor. Mn(2+) is required as a cofactor. Thiamine diphosphate serves as cofactor.

It catalyses the reaction isochorismate + 2-oxoglutarate + H(+) = 5-enolpyruvoyl-6-hydroxy-2-succinyl-cyclohex-3-ene-1-carboxylate + CO2. The protein operates within quinol/quinone metabolism; 1,4-dihydroxy-2-naphthoate biosynthesis; 1,4-dihydroxy-2-naphthoate from chorismate: step 2/7. It participates in quinol/quinone metabolism; menaquinone biosynthesis. Its function is as follows. Catalyzes the thiamine diphosphate-dependent decarboxylation of 2-oxoglutarate and the subsequent addition of the resulting succinic semialdehyde-thiamine pyrophosphate anion to isochorismate to yield 2-succinyl-5-enolpyruvyl-6-hydroxy-3-cyclohexene-1-carboxylate (SEPHCHC). The protein is 2-succinyl-5-enolpyruvyl-6-hydroxy-3-cyclohexene-1-carboxylate synthase of Myxococcus xanthus (strain DK1622).